Here is a 242-residue protein sequence, read N- to C-terminus: Sugar fermentation stimulation protein homolog (242 aa).

The protein belongs to the SfsA family.

The sequence is that of Sugar fermentation stimulation protein homolog from Enterococcus mundtii.